A 225-amino-acid chain; its full sequence is Prolactin (225 aa).

A signal peptide spans 1–28; that stretch reads MTIQGSDRKGTLLLLVMSNLLFCQNVHP. The cysteines at positions 32 and 37 are disulfide-linked. S52 and S116 each carry phosphoserine. 2 cysteine pairs are disulfide-bonded: C84–C200 and C217–C225.

The protein belongs to the somatotropin/prolactin family. Interacts with PRLR.

The protein resides in the secreted. Prolactin acts primarily on the mammary gland by promoting lactation. This is Prolactin (PRL) from Alexandromys montebelli (Japanese grass vole).